The following is a 166-amino-acid chain: MSDRIGLFAGSFDPVTNGHVDIIRRASGLFDKLYVGLFYNKDKTGLFEPARRQIMLKEALGDLKNVEVVAARDSLAVDIARQHQVTHLVRGLRNAQDLEYEANLAFFNSQLAKEIETVFLLTALDYRYFSSSRIRELIHFGADISPYVPQGVVKEVGKKCENKQKI.

Ser11 contacts substrate. Residues 11 to 12 (SF) and His19 contribute to the ATP site. Lys43, Ala76, and Arg90 together coordinate substrate. Residues 91–93 (GLR), Glu101, and 126–132 (YRYFSSS) each bind ATP.

The protein belongs to the bacterial CoaD family. Homohexamer. Requires Mg(2+) as cofactor.

It localises to the cytoplasm. The enzyme catalyses (R)-4'-phosphopantetheine + ATP + H(+) = 3'-dephospho-CoA + diphosphate. It participates in cofactor biosynthesis; coenzyme A biosynthesis; CoA from (R)-pantothenate: step 4/5. Its function is as follows. Reversibly transfers an adenylyl group from ATP to 4'-phosphopantetheine, yielding dephospho-CoA (dPCoA) and pyrophosphate. This is Phosphopantetheine adenylyltransferase from Streptococcus mutans serotype c (strain ATCC 700610 / UA159).